A 381-amino-acid chain; its full sequence is Hydrogenase nickel incorporation protein HupN (381 aa).

Topologically, residues 1–39 (MLPFSMTGLEKDHTRGVLILANAHRRSERSRTASCAGPA) are cytoplasmic. Residues 40–60 (VLFGGLITANIVAWAWAFALF) form a helical membrane-spanning segment. At 61-63 (ADR) the chain is on the periplasmic side. The helical transmembrane segment at 64 to 84 (PVVMATALLAWVFGLRHAVDA) threads the bilayer. Residues 85–110 (DHIAAIDNVVRSLMQTGGTPRSAGLY) are Cytoplasmic-facing. A helical transmembrane segment spans residues 111–131 (FALGHSSVVVVATMLLALGVV). Residues 132–149 (SLGGDGLLKEIGSFIGAS) lie on the Periplasmic side of the membrane. A helical transmembrane segment spans residues 150-170 (VSALFLLVIAAINLAIFASLW). Over 171 to 215 (RTFRKAREQGIRDAAGLDALLAHRGILVRLLGPMFRLVTKPWHMY) the chain is Cytoplasmic. Residues 216 to 236 (PLGFLFGLGFDTATEIGLLSI) form a helical membrane-spanning segment. The Periplasmic segment spans residues 237-243 (SASEAAR). The helical transmembrane segment at 244-264 (GASLADVMVFPALFAAGMALV) threads the bilayer. The Cytoplasmic segment spans residues 265–292 (DTADSTLMVSAYRWAFVDPMRKLWYNLT). A helical membrane pass occupies residues 293-313 (ITGASVAVALFIGGIEALGLI). At 314–333 (GNRLDLSGGVWTLIDALNES) the chain is on the periplasmic side. The chain crosses the membrane as a helical span at residues 334-354 (LANVGLAVIALFAIAWLLSIV). Residues 355–381 (LYRRLIAGSSGLADTEVLECADATEAV) lie on the Cytoplasmic side of the membrane.

Belongs to the NiCoT transporter (TC 2.A.52) family.

It localises to the cell inner membrane. Involved in nickel incorporation/metabolism into the hydrogenase apoprotein. The sequence is that of Hydrogenase nickel incorporation protein HupN (hupN) from Bradyrhizobium diazoefficiens (strain JCM 10833 / BCRC 13528 / IAM 13628 / NBRC 14792 / USDA 110).